The following is a 100-amino-acid chain: Putative insulin-like peptide beta-type 6 (100 aa).

The N-terminal stretch at 1-18 (MHSIVALMLIGTILPIAA) is a signal peptide. 4 cysteine pairs are disulfide-bonded: Cys-54/Cys-83, Cys-66/Cys-96, Cys-70/Cys-97, and Cys-82/Cys-87.

This sequence belongs to the insulin family.

Its subcellular location is the secreted. The chain is Putative insulin-like peptide beta-type 6 (ins-5) from Caenorhabditis elegans.